Reading from the N-terminus, the 482-residue chain is G-protein coupled receptor 37-like 1 (482 aa).

The N-terminal stretch at 1–25 (MRWLWPLGVSLAVALAAGPERAPRG) is a signal peptide. 2 disordered regions span residues 25-56 (GVWL…AKGL) and 78-119 (PTQP…VQNP). Residues 26–134 (VWLQQGGHQP…ERSYGAYAVL (109 aa)) are Extracellular-facing. Basic and acidic residues predominate over residues 40-54 (QPDRSRRGAEREDAK). A glycan (N-linked (GlcNAc...) asparagine) is linked at asparagine 105. A helical membrane pass occupies residues 135–155 (LLALLLFAVGIVGSLAVMCIV). At 156–167 (WHSYYLKSAWNS) the chain is on the cytoplasmic side. The helical transmembrane segment at 168–188 (VLASLALWDFLVLFFCLPVVT) threads the bilayer. Topologically, residues 189–205 (FHEITKQRLLGAVSCRA) are extracellular. Cysteines 203 and 286 form a disulfide. The chain crosses the membrane as a helical span at residues 206-226 (VPFVEVSSLGVTTFSLCALGI). Residues 227-251 (DRFHVATSTLPKARPIEPCPSILAK) lie on the Cytoplasmic side of the membrane. The chain crosses the membrane as a helical span at residues 252-272 (LAVIWVGSMTLAAPELLLWQL). Residues 273 to 310 (VREPSPAAGTVDTCIMKPSAHLPESLYSLVLTYQNARM) lie on the Extracellular side of the membrane. The helical transmembrane segment at 311–331 (WWSFGCYFCLPVLFTVTCQLV) threads the bilayer. Residues 332–361 (TWRVRGTPGRKPESRPGPQEPRGARPSSTV) are Cytoplasmic-facing. A disordered region spans residues 338–358 (TPGRKPESRPGPQEPRGARPS). Residues 362–382 (AGLAAVHALCALPENVCNVVA) traverse the membrane as a helical segment. Residues 383–398 (AYLSAALTRQTLELLG) are Extracellular-facing. The helical transmembrane segment at 399–419 (LVTQFSTFFKAALTPLLLLCV) threads the bilayer. Residues 420-482 (SRPLGRAFLD…PPLLALGTPC (63 aa)) are Cytoplasmic-facing. Threonine 480 carries the post-translational modification Phosphothreonine.

This sequence belongs to the G-protein coupled receptor 1 family. In terms of assembly, interacts with the PTCH1 receptor. Post-translationally, undergoes metalloprotease-mediated cleavage which reduces its constitutive activity. In terms of processing, ubiquitinated.

It localises to the cell membrane. It is found in the cell projection. Its subcellular location is the cilium membrane. Functionally, G-protein coupled receptor. Has been shown to bind the neuroprotective and glioprotective factor prosaposin (PSAP), leading to endocytosis followed by an ERK phosphorylation cascade. However, other studies have shown that prosaposin does not increase activity. It has been suggested that GPR37L1 is a constitutively active receptor which signals through the guanine nucleotide-binding protein G(s) subunit alpha. Participates in the regulation of postnatal cerebellar development by modulating the Shh pathway. Regulates baseline blood pressure in females and protects against cardiovascular stress in males. Mediates inhibition of astrocyte glutamate transporters and reduction in neuronal N-methyl-D-aspartate receptor activity. In Bos taurus (Bovine), this protein is G-protein coupled receptor 37-like 1 (GPR37L1).